A 207-amino-acid chain; its full sequence is Mediator of RNA polymerase II transcription subunit 21 (207 aa).

Positions 36–120 (IPPPDVPDAA…APDSPRTFAS (85 aa)) are disordered. The span at 91–108 (GEGAQTPGPAAGAGADPN) shows a compositional bias: low complexity. Residues 146 to 194 (IDSSEAEQEKRIRELEGELRQVEEERELKMRELKRLRRTLENVLTAVET) are a coiled coil.

This sequence belongs to the Mediator complex subunit 21 family. Component of the Mediator complex.

Its subcellular location is the nucleus. Component of the Mediator complex, a coactivator involved in the regulated transcription of nearly all RNA polymerase II-dependent genes. Mediator functions as a bridge to convey information from gene-specific regulatory proteins to the basal RNA polymerase II transcription machinery. Mediator is recruited to promoters by direct interactions with regulatory proteins and serves as a scaffold for the assembly of a functional preinitiation complex with RNA polymerase II and the general transcription factors. The protein is Mediator of RNA polymerase II transcription subunit 21 (srb7) of Aspergillus fumigatus (strain ATCC MYA-4609 / CBS 101355 / FGSC A1100 / Af293) (Neosartorya fumigata).